A 459-amino-acid chain; its full sequence is Ribulose bisphosphate carboxylase (459 aa).

Asn-111 is a substrate binding site. The active-site Proton acceptor is the Lys-166. Position 168 (Lys-168) interacts with substrate. Lys-191, Asp-193, and Glu-194 together coordinate Mg(2+). Lys-191 carries the N6-carboxylysine modification. His-287 serves as the catalytic Proton acceptor. Substrate contacts are provided by Arg-288, His-321, and Ser-368.

Belongs to the RuBisCO large chain family. Type II subfamily. In terms of assembly, homodimer. Mg(2+) serves as cofactor.

It carries out the reaction 2 (2R)-3-phosphoglycerate + 2 H(+) = D-ribulose 1,5-bisphosphate + CO2 + H2O. The catalysed reaction is D-ribulose 1,5-bisphosphate + O2 = 2-phosphoglycolate + (2R)-3-phosphoglycerate + 2 H(+). Its function is as follows. RuBisCO catalyzes two reactions: the carboxylation of D-ribulose 1,5-bisphosphate, the primary event in carbon dioxide fixation, as well as the oxidative fragmentation of the pentose substrate. Both reactions occur simultaneously and in competition at the same active site. The polypeptide is Ribulose bisphosphate carboxylase (Cereibacter sphaeroides (strain ATCC 17029 / ATH 2.4.9) (Rhodobacter sphaeroides)).